Consider the following 162-residue polypeptide: Putative 4-hydroxy-4-methyl-2-oxoglutarate aldolase (162 aa).

Substrate contacts are provided by residues Gly-75 to Leu-78 and Arg-97. Position 98 (Asp-98) interacts with a divalent metal cation.

Belongs to the class II aldolase/RraA-like family. In terms of assembly, homotrimer. It depends on a divalent metal cation as a cofactor.

The catalysed reaction is 4-hydroxy-4-methyl-2-oxoglutarate = 2 pyruvate. It carries out the reaction oxaloacetate + H(+) = pyruvate + CO2. Functionally, catalyzes the aldol cleavage of 4-hydroxy-4-methyl-2-oxoglutarate (HMG) into 2 molecules of pyruvate. Also contains a secondary oxaloacetate (OAA) decarboxylase activity due to the common pyruvate enolate transition state formed following C-C bond cleavage in the retro-aldol and decarboxylation reactions. This Stutzerimonas stutzeri (strain A1501) (Pseudomonas stutzeri) protein is Putative 4-hydroxy-4-methyl-2-oxoglutarate aldolase.